The sequence spans 226 residues: Urease accessory protein UreF (226 aa).

The protein belongs to the UreF family. As to quaternary structure, ureD, UreF and UreG form a complex that acts as a GTP-hydrolysis-dependent molecular chaperone, activating the urease apoprotein by helping to assemble the nickel containing metallocenter of UreC. The UreE protein probably delivers the nickel.

It is found in the cytoplasm. In terms of biological role, required for maturation of urease via the functional incorporation of the urease nickel metallocenter. The protein is Urease accessory protein UreF of Burkholderia multivorans (strain ATCC 17616 / 249).